The chain runs to 512 residues: Transactivator/viroplasmin protein (512 aa).

2 disordered regions span residues 76 to 123 (GNER…NPVA) and 474 to 512 (ADSS…IPSI). Residues 476–487 (SSSTSGEQNNVE) show a composition bias toward polar residues. Residues 499 to 512 (YDERSDDHKRIPSI) show a composition bias toward basic and acidic residues.

It belongs to the caulimoviridae viroplasmin family.

Its subcellular location is the host cytoplasm. Enhances the translation of downstream ORFs on polycistronic mRNAs derived from figwort mosaic virus. In Figwort mosaic virus (strain DxS) (FMV), this protein is Transactivator/viroplasmin protein.